Here is a 187-residue protein sequence, read N- to C-terminus: MTWSVFRSINTPTLDLSTALRSTRTPLVAAGVGCATFAGVSLFRMSSRSPPFASLSVSASSVKKEVVSTEKAPAALGPYSQAIKANNLVFLSGVLGLIPETGKFVSESVEDQTEQVLKNMGEILKASGADYSSVVKTTIMLADLADFKTVNEIYAKYFPAPSPARSTYQVAALPLNAKIEIECIATL.

A chloroplast-targeting transit peptide spans 1-58 (MTWSVFRSINTPTLDLSTALRSTRTPLVAAGVGCATFAGVSLFRMSSRSPPFASLSVS). Arginine 165 is a substrate binding site.

It belongs to the RutC family. As to expression, expressed in leaves, petiols, petals, carpels and shoot apex.

The protein localises to the plastid. It localises to the chloroplast. It catalyses the reaction 2-iminobutanoate + H2O = 2-oxobutanoate + NH4(+). The enzyme catalyses 2-iminopropanoate + H2O = pyruvate + NH4(+). It participates in amino-acid biosynthesis; L-isoleucine biosynthesis; 2-oxobutanoate from L-threonine. In terms of biological role, hydrolyzes the Ser-derived enamine/imine product of Thr dehydratase, protecting the plastidial branched-chain aminotransferase BCAT3 (AC Q9M401) from inactivation. Involved in Ile biosynthesis. In Arabidopsis thaliana (Mouse-ear cress), this protein is Reactive Intermediate Deaminase A, chloroplastic.